Reading from the N-terminus, the 456-residue chain is GTPase Der (456 aa).

EngA-type G domains follow at residues 4–169 and 178–353; these read PVVA…PSKD and VQLA…DQSR. GTP is bound by residues 10 to 17, 57 to 61, 120 to 123, 184 to 191, 231 to 235, and 296 to 299; these read GRPNVGKS, DTGGL, NKCE, DTAGI, and NKWD. In terms of domain architecture, KH-like spans 354-439; it reads RRVTTSVVNE…PIKLFWRGKQ (86 aa).

The protein belongs to the TRAFAC class TrmE-Era-EngA-EngB-Septin-like GTPase superfamily. EngA (Der) GTPase family. As to quaternary structure, associates with the 50S ribosomal subunit.

In terms of biological role, GTPase that plays an essential role in the late steps of ribosome biogenesis. The protein is GTPase Der of Prochlorococcus marinus (strain NATL2A).